The sequence spans 233 residues: Adenosylcobinamide-GDP ribazoletransferase (233 aa).

7 helical membrane-spanning segments follow: residues 24–44 (LWAL…VLYL), 46–66 (LPLS…LLHL), 96–116 (IAGV…LPLL), 117–137 (PFYA…LALA), 158–178 (QLTL…YIEP), 181–198 (ISSL…RLSL), and 209–229 (IGAV…VVWV).

This sequence belongs to the CobS family. Mg(2+) is required as a cofactor.

It is found in the cell membrane. The catalysed reaction is alpha-ribazole + adenosylcob(III)inamide-GDP = adenosylcob(III)alamin + GMP + H(+). It carries out the reaction alpha-ribazole 5'-phosphate + adenosylcob(III)inamide-GDP = adenosylcob(III)alamin 5'-phosphate + GMP + H(+). It functions in the pathway cofactor biosynthesis; adenosylcobalamin biosynthesis; adenosylcobalamin from cob(II)yrinate a,c-diamide: step 7/7. Functionally, joins adenosylcobinamide-GDP and alpha-ribazole to generate adenosylcobalamin (Ado-cobalamin). Also synthesizes adenosylcobalamin 5'-phosphate from adenosylcobinamide-GDP and alpha-ribazole 5'-phosphate. This Thermococcus gammatolerans (strain DSM 15229 / JCM 11827 / EJ3) protein is Adenosylcobinamide-GDP ribazoletransferase.